A 102-amino-acid chain; its full sequence is Small ribosomal subunit protein uS10 (102 aa).

Belongs to the universal ribosomal protein uS10 family. As to quaternary structure, part of the 30S ribosomal subunit.

Involved in the binding of tRNA to the ribosomes. The sequence is that of Small ribosomal subunit protein uS10 from Staphylococcus aureus (strain Mu3 / ATCC 700698).